A 365-amino-acid chain; its full sequence is 2-aminoethylphosphonate--pyruvate transaminase (365 aa).

Lys-194 is modified (N6-(pyridoxal phosphate)lysine).

This sequence belongs to the class-V pyridoxal-phosphate-dependent aminotransferase family. PhnW subfamily. In terms of assembly, homodimer. Requires pyridoxal 5'-phosphate as cofactor.

It carries out the reaction (2-aminoethyl)phosphonate + pyruvate = phosphonoacetaldehyde + L-alanine. Involved in phosphonate degradation. This chain is 2-aminoethylphosphonate--pyruvate transaminase, found in Bacillus cereus (strain ATCC 14579 / DSM 31 / CCUG 7414 / JCM 2152 / NBRC 15305 / NCIMB 9373 / NCTC 2599 / NRRL B-3711).